The following is a 255-amino-acid chain: Indole-3-glycerol phosphate synthase (255 aa).

It belongs to the TrpC family.

The catalysed reaction is 1-(2-carboxyphenylamino)-1-deoxy-D-ribulose 5-phosphate + H(+) = (1S,2R)-1-C-(indol-3-yl)glycerol 3-phosphate + CO2 + H2O. It participates in amino-acid biosynthesis; L-tryptophan biosynthesis; L-tryptophan from chorismate: step 4/5. The protein is Indole-3-glycerol phosphate synthase of Shouchella clausii (strain KSM-K16) (Alkalihalobacillus clausii).